Here is a 341-residue protein sequence, read N- to C-terminus: Keratin-associated protein 29-1 (341 aa).

7 repeat units span residues 5–9, 115–119, 120–124, 150–154, 240–244, 276–280, and 307–311. A 7 X 5 AA repeats of C-C-X(3) region spans residues 5–311; it reads CCPGNTTAIP…GCKSACCVTG (307 aa).

It belongs to the KRTAP type 10 family.

In Homo sapiens (Human), this protein is Keratin-associated protein 29-1 (KRTAP29-1).